Reading from the N-terminus, the 357-residue chain is APGTLTELAGESKLNSKFVRDEDERPKVAYNEFSDEIPVISLAGIDDVDGKRGEICREIVEACENWGIFQVVDHGVDTSLVADMTRLARDFFALPPEEKLRFDMSGGKKGGFIVSSHLQGEAVQDWREIVTYFSYPVRNRDYSRWPDKPQGWAKVTEEYSEKLMGLACKLLEVLSEAMGLEKESLTNACVDMDQKIVVNYYPKCPQPDLTLGLKRHTDPGTITLLLQDQVGGLQATRDDGNTWITVQPVEGAFVVNLGDHGHFLSNGRFKNADHQAVVNSNSSRLSIATFQNPAPEATVYPLKVREGEKAIMEEPITFAEMYKRKMGRDLELARLKKLAKEEHNHKEAAKPLDQILA.

Positions 189-293 (CVDMDQKIVV…RLSIATFQNP (105 aa)) constitute a Fe2OG dioxygenase domain. Residues histidine 216, aspartate 218, and histidine 274 each contribute to the Fe cation site. Arginine 284 is a binding site for 2-oxoglutarate.

The protein belongs to the iron/ascorbate-dependent oxidoreductase family. Fe(2+) is required as a cofactor. L-ascorbate serves as cofactor.

It carries out the reaction a (2S)-flavan-4-one + 2-oxoglutarate + O2 = a (2R,3R)-dihydroflavonol + succinate + CO2. It functions in the pathway secondary metabolite biosynthesis; flavonoid biosynthesis. In terms of biological role, catalyzes the 3-beta-hydroxylation of 2S-flavanones to 2R,3R-dihydroflavonols which are intermediates in the biosynthesis of flavonols, anthocyanidins, catechins and proanthocyanidins in plants. The sequence is that of Naringenin,2-oxoglutarate 3-dioxygenase (FHT) from Matthiola incana (Common stock).